Consider the following 429-residue polypeptide: UPF0242 protein CT_616 (429 aa).

It belongs to the UPF0242 family.

The polypeptide is UPF0242 protein CT_616 (Chlamydia trachomatis serovar D (strain ATCC VR-885 / DSM 19411 / UW-3/Cx)).